The sequence spans 458 residues: O-acetyltransferase dmxR13 (458 aa).

Residues 211–231 (ELARQISQPRPPPSSDGPPPP) are disordered. Positions 219–231 (PRPPPSSDGPPPP) are enriched in pro residues.

It belongs to the trichothecene 3-O-acetyltransferase family.

It functions in the pathway secondary metabolite biosynthesis. O-acetyltransferase; part of the gene cluster that mediates the biosynthesis of the dimeric xanthones cryptosporioptides. The pathway begins with the synthesis of atrochrysone thioester by the polyketide synthase dmx-nrPKS. The atrochrysone carboxyl ACP thioesterase dmxR1 then breaks the thioester bond and releases the atrochrysone carboxylic acid from dmx-nrPKS. Atrochrysone carboxylic acid is decarboxylated by the decarboxylase dmxR15, and oxidized by the anthrone oxygenase dmxR16 to yield emodin. Emodin is then reduced to emodin hydroquinone by the oxidoreductase dmxR7. A-ring reduction by the short chain dehydrogenase dmxR18, dehydration by the scytalone dehydratase-like protein dmxR17 and probable spontaneous re-oxidation, results in overall deoxygenation to chrysophanol. Baeyer-Villiger oxidation by the Baeyer-Villiger monooxygenase (BVMO) dmxR6 then yields monodictylactone in equilibrium with monodictyphenone. In the case of the cryptosporioptides biosynthesis, monodictylactone is reduced at C-12 to an alcohol (by the short chain dehydrogenases dmxR12 or dmxR8) and hydroxylated at C-5 by dmxR9, yielding the electron-rich aromatic which could eliminate H(2)O to form the ortho-quinonemethide, followed by tautomerisation to paraquinone and complete the formal reduction to produce the 10-methylgroup. Conjugate addition of C-4a-OH to the resulting paraquinone by the monooxygenase dmxR10 then gives cyclohexadienone, which is then reduced at C-5 by the short chain dehydrogenase dmxR3 to give the dihydroxanthone. The 6,7-epoxide in the cryptosporioptides could be introduced by the cytochrome P450 monooxygenase dmxL3. The highly reducing PKS dmxL2 manufactures butyrate, which is further carboxylated by dmxL1 to form ethylmalonate. It is not yet clear whether the carboxylation occurs while the butyrate is attached to the ACP of dmxL2, but this unusual fungal metabolite could then be esterified to O-5 by the O-acetyltransferase dmxR13. Finally, dimerization performed by dmxR5 gives the observed dimers cryptosporioptides A, B and C as the final products of the pathway. The chain is O-acetyltransferase dmxR13 from Cryptosporiopsis sp. (strain 8999).